We begin with the raw amino-acid sequence, 78 residues long: Large ribosomal subunit protein bL28 (78 aa).

It belongs to the bacterial ribosomal protein bL28 family.

The protein is Large ribosomal subunit protein bL28 of Haemophilus influenzae (strain 86-028NP).